A 448-amino-acid polypeptide reads, in one-letter code: Hyaluronidase conohyal-Cn1 (448 aa).

A signal peptide spans M1–A18. The propeptide occupies L19–R33. Positions V26–Q55 are disordered. The segment covering S31 to G43 has biased composition (low complexity). An intrachain disulfide couples C67 to C344. Residue N141 is glycosylated (N-linked (GlcNAc...) asparagine). The Proton donor role is filled by E151. N-linked (GlcNAc...) asparagine glycosylation is found at N169 and N361. 3 cysteine pairs are disulfide-bonded: C369–C380, C374–C413, and C415–C424. The region spanning C413 to C424 is the EGF-like domain.

The protein belongs to the glycosyl hydrolase 56 family. As to expression, expressed by the venom duct.

The protein localises to the secreted. The catalysed reaction is Random hydrolysis of (1-&gt;4)-linkages between N-acetyl-beta-D-glucosamine and D-glucuronate residues in hyaluronate.. Its function is as follows. Hyaluronidase catalyzes the hydrolysis of hyaluronic acid (HA), an anionic, nonsulfated glycosaminoglycan distributed widely throughout connective, epithelial, and neural tissues. In venom, they are known to enhance diffusion of the venom by degrading the extracellular matrix. This is Hyaluronidase conohyal-Cn1 from Conus consors (Singed cone).